Here is a 378-residue protein sequence, read N- to C-terminus: Erythronate-4-phosphate dehydrogenase (378 aa).

Ser-45 and Thr-67 together coordinate substrate. Asp-147 contributes to the NAD(+) binding site. The active site involves Arg-209. Asp-233 contributes to the NAD(+) binding site. Glu-238 is a catalytic residue. His-255 serves as the catalytic Proton donor. Residue Gly-258 participates in NAD(+) binding. Substrate is bound at residue Tyr-259.

This sequence belongs to the D-isomer specific 2-hydroxyacid dehydrogenase family. PdxB subfamily. As to quaternary structure, homodimer.

The protein localises to the cytoplasm. It catalyses the reaction 4-phospho-D-erythronate + NAD(+) = (R)-3-hydroxy-2-oxo-4-phosphooxybutanoate + NADH + H(+). It participates in cofactor biosynthesis; pyridoxine 5'-phosphate biosynthesis; pyridoxine 5'-phosphate from D-erythrose 4-phosphate: step 2/5. Functionally, catalyzes the oxidation of erythronate-4-phosphate to 3-hydroxy-2-oxo-4-phosphonooxybutanoate. The protein is Erythronate-4-phosphate dehydrogenase of Shewanella denitrificans (strain OS217 / ATCC BAA-1090 / DSM 15013).